Here is a 598-residue protein sequence, read N- to C-terminus: Elongation factor 4 (598 aa).

Residues 2–184 (KNIRNFSIIA…EIVAKIPAPE (183 aa)) enclose the tr-type G domain. GTP-binding positions include 14-19 (DHGKST) and 131-134 (NKID).

It belongs to the TRAFAC class translation factor GTPase superfamily. Classic translation factor GTPase family. LepA subfamily.

Its subcellular location is the cell inner membrane. The catalysed reaction is GTP + H2O = GDP + phosphate + H(+). In terms of biological role, required for accurate and efficient protein synthesis under certain stress conditions. May act as a fidelity factor of the translation reaction, by catalyzing a one-codon backward translocation of tRNAs on improperly translocated ribosomes. Back-translocation proceeds from a post-translocation (POST) complex to a pre-translocation (PRE) complex, thus giving elongation factor G a second chance to translocate the tRNAs correctly. Binds to ribosomes in a GTP-dependent manner. The protein is Elongation factor 4 of Haemophilus influenzae (strain 86-028NP).